We begin with the raw amino-acid sequence, 187 residues long: UPF0301 protein Shewmr7_1270 (187 aa).

The protein belongs to the UPF0301 (AlgH) family.

This Shewanella sp. (strain MR-7) protein is UPF0301 protein Shewmr7_1270.